Consider the following 116-residue polypeptide: T cell receptor alpha variable 14/delta variable 4 (116 aa).

The signal sequence occupies residues 1–21 (MSLSSLLKVVTASLWLGPGIA). The Ig-like domain occupies 22-116 (QKITQTQPGM…SAMYFCAMRE (95 aa)). A disulfide bridge connects residues cysteine 43 and cysteine 112. The N-linked (GlcNAc...) asparagine glycan is linked to asparagine 78.

Alpha-beta TR is a heterodimer composed of an alpha and beta chain; disulfide-linked. The alpha-beta TR is associated with the transmembrane signaling CD3 coreceptor proteins to form the TR-CD3 (TcR or TCR). The assembly of alpha-beta TR heterodimers with CD3 occurs in the endoplasmic reticulum where a single alpha-beta TR heterodimer associates with one CD3D-CD3E heterodimer, one CD3G-CD3E heterodimer and one CD247 homodimer forming a stable octameric structure. CD3D-CD3E and CD3G-CD3E heterodimers preferentially associate with TR alpha and TR beta chains, respectively. The association of the CD247 homodimer is the last step of TcR assembly in the endoplasmic reticulum and is required for transport to the cell surface.

The protein resides in the cell membrane. V region of the variable domain of T cell receptor (TR) alpha chain that participates in the antigen recognition. Alpha-beta T cell receptors are antigen specific receptors which are essential to the immune response and are present on the cell surface of T lymphocytes. Recognize peptide-major histocompatibility (MH) (pMH) complexes that are displayed by antigen presenting cells (APC), a prerequisite for efficient T cell adaptive immunity against pathogens. Binding of alpha-beta TR to pMH complex initiates TR-CD3 clustering on the cell surface and intracellular activation of LCK that phosphorylates the ITAM motifs of CD3G, CD3D, CD3E and CD247 enabling the recruitment of ZAP70. In turn ZAP70 phosphorylates LAT, which recruits numerous signaling molecules to form the LAT signalosome. The LAT signalosome propagates signal branching to three major signaling pathways, the calcium, the mitogen-activated protein kinase (MAPK) kinase and the nuclear factor NF-kappa-B (NF-kB) pathways, leading to the mobilization of transcription factors that are critical for gene expression and essential for T cell growth and differentiation. The T cell repertoire is generated in the thymus, by V-(D)-J rearrangement. This repertoire is then shaped by intrathymic selection events to generate a peripheral T cell pool of self-MH restricted, non-autoaggressive T cells. Post-thymic interaction of alpha-beta TR with the pMH complexes shapes TR structural and functional avidity. This Homo sapiens (Human) protein is T cell receptor alpha variable 14/delta variable 4.